A 108-amino-acid chain; its full sequence is Small ribosomal subunit protein eS25y (108 aa).

The interval 1–36 (MAPKKDKVPPPSSKPAKSGGGKQKKKKWSKGKQKEK) is disordered. Over residues 22–31 (KQKKKKWSKG) the composition is skewed to basic residues.

This sequence belongs to the eukaryotic ribosomal protein eS25 family.

The protein is Small ribosomal subunit protein eS25y (RPS25B) of Arabidopsis thaliana (Mouse-ear cress).